A 93-amino-acid chain; its full sequence is YcgL domain-containing protein VSAL_I1068 (93 aa).

In terms of domain architecture, YcgL spans 1–84 (MYCSIYKSSK…PPENLLEKYK (84 aa)).

In Aliivibrio salmonicida (strain LFI1238) (Vibrio salmonicida (strain LFI1238)), this protein is YcgL domain-containing protein VSAL_I1068.